A 336-amino-acid chain; its full sequence is Potassium channel subfamily K member 1 (336 aa).

The Cytoplasmic portion of the chain corresponds to 1–20 (MLQSLAGSSCVRLVERHRSA). A helical transmembrane segment spans residues 21–41 (WCFGFLVLGYLLYLVFGAVVF). Topologically, residues 42–103 (SSVELPYEDL…SNASGNWNWD (62 aa)) are extracellular. N95 is a glycosylation site (N-linked (GlcNAc...) asparagine). The helical intramembrane region spans 104–116 (FTSALFFASTVLS). An intramembrane segment occupies 117-122 (TTGYGH). The interval 117–122 (TTGYGH) is selectivity filter 1. At 123 to 132 (TVPLSDGGKA) the chain is on the extracellular side. The helical transmembrane segment at 133–156 (FCIIYSVIGIPFTLLFLTAVVQRV) threads the bilayer. Over 157–181 (TIHVTRRPVLYFHVRWGFSKQAVAI) the chain is Cytoplasmic. Residues 182–202 (VHAVLLGVVTVSCFFFIPAAV) traverse the membrane as a helical segment. Topologically, residues 203 to 211 (FSVLEDDWN) are extracellular. Positions 212-224 (FLESFYFCFISLS) form an intramembrane region, helical. The segment at 225–230 (TIGLGD) is selectivity filter 2. An intramembrane segment occupies 225–231 (TIGLGDY). Residues 232–243 (VPGEGYNQKFRE) are Extracellular-facing. A helical membrane pass occupies residues 244–267 (LYKIGITCYLLLGLIAMLVVLETF). Over 268-336 (CELHELKKFR…PALADGASDH (69 aa)) the chain is Cytoplasmic. A Glycyl lysine isopeptide (Lys-Gly) (interchain with G-Cter in SUMO) cross-link involves residue K274. The tract at residues 293–299 (IIEHDQL) is important for intracellular retention in recycling endosomes. The disordered stretch occupies residues 307–336 (QAAGVQEDQKQNEPFVSPQPPALADGASDH).

It belongs to the two pore domain potassium channel (TC 1.A.1.8) family. As to quaternary structure, homodimer; disulfide-linked. Heterodimer with KCNK2; disulfide-linked. In astrocytes, forms mostly heterodimeric potassium channels with KCNK2, with only a minor proportion of functional channels containing homodimeric KCNK1. Interacts with KCNK3 and KCNK9, forming functional heterodimeric channels. Interacts with GNG4. Identified in a complex with PSD and ARF6; interacts only with PSD that is bound to ARF6. Interacts with UBE2I. Post-translationally, sumoylation is controversial. Sumoylated by UBE2I. Not sumoylated when expressed in xenopus oocytes or mammalian cells. Sumoylation inactivates the channel, but does not interfere with expression at the cell membrane. Sumoylation of a single subunit is sufficient to silence the dimeric channel. Sumoylation of KCNK1 is sufficient to silence heterodimeric channels formed by KCNK1 and KCNK3 or KCNK9. Desumoylated by SENP1; this activates the channel. Desumoylated by SENP1; this strongly increases halothane-mediated activation of heterodimeric channels formed with KCNK9. SENP1 treatment has no effect.

The protein localises to the cell membrane. Its subcellular location is the recycling endosome. It is found in the synaptic cell membrane. It localises to the cytoplasmic vesicle. The protein resides in the perikaryon. The protein localises to the cell projection. Its subcellular location is the dendrite. It is found in the apical cell membrane. It catalyses the reaction K(+)(in) = K(+)(out). The catalysed reaction is NH4(+)(in) = NH4(+)(out). It carries out the reaction Na(+)(in) = Na(+)(out). The enzyme catalyses Rb(+)(in) = Rb(+)(out). It catalyses the reaction Cs(+)(in) = Cs(+)(out). The catalysed reaction is Li(+)(in) = Li(+)(out). It carries out the reaction L-glutamate(out) = L-glutamate(in). The enzyme catalyses chloride(in) = chloride(out). Functionally, ion channel that contributes to passive transmembrane potassium transport and to the regulation of the resting membrane potential in brain astrocytes, but also in kidney and in other tissues. Forms dimeric channels through which potassium ions pass in accordance with their electrochemical gradient. The channel is selective for K(+) ions at physiological potassium concentrations and at neutral pH, but becomes permeable to Na(+) at subphysiological K(+) levels and upon acidification of the extracellular medium. The homodimer has very low potassium channel activity, when expressed in heterologous systems, and can function as weakly inward rectifying potassium channel. Channel activity is modulated by activation of serotonin receptors. Heterodimeric channels containing KCNK1 and KCNK2 have much higher activity, and may represent the predominant form in astrocytes. Heterodimeric channels containing KCNK1 and KCNK3 or KCNK9 have much higher activity. Heterodimeric channels formed by KCNK1 and KCNK9 may contribute to halothane-sensitive currents. Mediates outward rectifying potassium currents in dentate gyrus granule cells and contributes to the regulation of their resting membrane potential. Contributes to the regulation of action potential firing in dentate gyrus granule cells and down-regulates their intrinsic excitability. In astrocytes, the heterodimer formed by KCNK1 and KCNK2 is required for rapid glutamate release in response to activation of G-protein coupled receptors, such as F2R and CNR1. Required for normal ion and water transport in the kidney. Contributes to the regulation of the resting membrane potential of pancreatic beta cells. The low channel activity of homodimeric KCNK1 may be due to sumoylation. The low channel activity may be due to rapid internalization from the cell membrane and retention in recycling endosomes. Permeable to monovalent cations with ion selectivity for K(+) &gt; Rb(+) &gt;&gt; NH4(+) &gt;&gt; Cs(+) = Na(+) = Li(+). In Bos taurus (Bovine), this protein is Potassium channel subfamily K member 1.